Reading from the N-terminus, the 273-residue chain is Phosphatidylglycerol--prolipoprotein diacylglyceryl transferase (273 aa).

The next 3 membrane-spanning stretches (helical) occupy residues 20–40 (LAVR…LPIA), 59–79 (FLFY…VLFY), and 97–117 (GGMS…YFSW). R142 contributes to the a 1,2-diacyl-sn-glycero-3-phospho-(1'-sn-glycerol) binding site. A run of 2 helical transmembrane segments spans residues 206 to 226 (FGFL…FCEF) and 243 to 263 (MGQL…VYAM).

Belongs to the Lgt family.

The protein localises to the cell inner membrane. It catalyses the reaction L-cysteinyl-[prolipoprotein] + a 1,2-diacyl-sn-glycero-3-phospho-(1'-sn-glycerol) = an S-1,2-diacyl-sn-glyceryl-L-cysteinyl-[prolipoprotein] + sn-glycerol 1-phosphate + H(+). Its pathway is protein modification; lipoprotein biosynthesis (diacylglyceryl transfer). Catalyzes the transfer of the diacylglyceryl group from phosphatidylglycerol to the sulfhydryl group of the N-terminal cysteine of a prolipoprotein, the first step in the formation of mature lipoproteins. The sequence is that of Phosphatidylglycerol--prolipoprotein diacylglyceryl transferase from Gluconobacter oxydans (strain 621H) (Gluconobacter suboxydans).